Here is a 359-residue protein sequence, read N- to C-terminus: 1-deoxy-D-xylulose 5-phosphate reductoisomerase (359 aa).

Positions 7, 8, 9, 10, 31, 32, 33, and 111 each coordinate NADPH. Position 112 (Lys-112) interacts with 1-deoxy-D-xylulose 5-phosphate. Glu-113 contributes to the NADPH binding site. Asp-131 is a binding site for Mn(2+). Positions 132, 133, 155, and 178 each coordinate 1-deoxy-D-xylulose 5-phosphate. A Mn(2+)-binding site is contributed by Glu-133. Gly-184 provides a ligand contact to NADPH. 1-deoxy-D-xylulose 5-phosphate is bound by residues Ser-191, Asn-196, Lys-197, and Glu-200. Glu-200 serves as a coordination point for Mn(2+).

The protein belongs to the DXR family. The cofactor is Mg(2+). Mn(2+) serves as cofactor.

The catalysed reaction is 2-C-methyl-D-erythritol 4-phosphate + NADP(+) = 1-deoxy-D-xylulose 5-phosphate + NADPH + H(+). Its pathway is isoprenoid biosynthesis; isopentenyl diphosphate biosynthesis via DXP pathway; isopentenyl diphosphate from 1-deoxy-D-xylulose 5-phosphate: step 1/6. In terms of biological role, catalyzes the NADPH-dependent rearrangement and reduction of 1-deoxy-D-xylulose-5-phosphate (DXP) to 2-C-methyl-D-erythritol 4-phosphate (MEP). This is 1-deoxy-D-xylulose 5-phosphate reductoisomerase from Campylobacter lari (strain RM2100 / D67 / ATCC BAA-1060).